The following is a 1385-amino-acid chain: MGALPCPAHIEHHQGLSSFGTRRVLRQSVACGAHRSRRRSLWAGASPGAPKYDEGALSCSFQLGSASLHVSEVRGSRHATPRAPPTGGCIELPKTLALTEEQDQRAARATSQLLNAISRCAAGSPLARLLTGPHGAASATGAGSHSSSAGAPTPTPRPDIAAAAALLPSLTWRWVSVADLEGGWVDRGVAHLLREALLVQKAASDVNASVSELVGWCMDNCSAPAAALAALWGQQQGAALPARSRSFYGLLLQRLDGGGASSAVAAAAGRQPHEHQQERSSAEAYGLSPALVFCSSVARTALSTSSRRGGRSSSSEEDGDAHDDRSHPHTQQLLEQDGSEPLVGAAASPSSNGKRSAAGPSAGADVILVGELPGDVLLDESVGNVRRQQPHANGSGAKHNGVNGSGKSGSGGAKVAHAHVNGSAADTDPGQAALGVKGSAESPLEQPAPAAKRSAAGKASRPAALLLKRPSRSAAPPAPTLPDGAEADGFASDGSGLPGHGQQQLSAIAAAAAASSLLAGPAAPMSFLETLSDDDDEARRAASLLNGAGMSDPASASSTSTSSNSGTSNLVGRVFVPMRLVSVSRFPLRDALGRPLPDGLAVPPTGPIVLSNDARVFPGTEGLLSDYATPAGDKLAVRLEYITDRSYAYGDVALQLFNISRVTRKRTDNCQMLVNGKPVNVGDPGVPLVPGDEIRFGASAAFAFRLEALPEAPSGLEAAVQQLQLHADSSSSNGNGSGSSSSSGLPQVSEEEVAAAAADMASLSNMSRRDPPRAEALLRRLLAARPGDAALWLIWAQMAARVEGPGPGQAKARMLFRAAADAARRMPVLPPPPLALQMAARRATGAGRRRRRGASTTASMDGDDGALSVADGSSSADAAIDPASGASPSAAAGPPAPSARPRHNWLLVQALGNWGKHEWRLRMYGSARHLFRAAADEAARHSGGLAAGGGGAVMHYWGSRELEAGNVRNARIVAAEALRKCPADVALYVLAASVELEASNLELAKGYCQRAYALDRTDKQLFLIWPRVEAGLGDRDKARLLFERALDAHPLNTKIINMYARFEAEEGSYREAAELYDRALQIDPLSPGPGVHNRADWASMETDLGNTGLARQLLEEGLEAHPNSAALLVVYSKLQRLEGRYQEALAAVRRAQAVAGAFNAAVMNERAQVLRALGERELAANLSRHVSAVKQLNRMKQQGYWGSEAWRAFVEATRTPEQRTLVAAARAHRLQLGWAPAVRGAKPGPPPGVVAGDGRRPAAPETQQWMALEELRRQRAEARRLTAQRTARLRAEEAAAAAGGGEAGAAAAAAALAMGSTGSMGSMDGDEGYDDEIQDPVMYGADLGSGPLPRRRLEDQDADYYEEPESMALPPLDAVRRPMPDADDM.

Residues 1–45 (MGALPCPAHIEHHQGLSSFGTRRVLRQSVACGAHRSRRRSLWAGA) constitute a chloroplast transit peptide. The segment covering 132–152 (GPHGAASATGAGSHSSSAGAP) has biased composition (low complexity). Disordered regions lie at residues 132-157 (GPHG…PTPR), 263-282 (AVAA…RSSA), 304-360 (TSSR…AAGP), 387-502 (RQQP…GHGQ), 546-568 (NGAG…SGTS), 726-756 (HADS…VAAA), and 840-899 (ARRA…APSA). Basic and acidic residues predominate over residues 271-281 (QPHEHQQERSS). Residues 304–313 (TSSRRGGRSS) show a composition bias toward low complexity. Residues 403–412 (NGSGKSGSGG) are compositionally biased toward gly residues. Composition is skewed to low complexity over residues 448–464 (APAA…RPAA), 554–568 (ASAS…SGTS), 729–744 (SSSS…SSSG), and 854–893 (ASTT…AAAG). TPR repeat units lie at residues 851–884 (RRGA…DPAS), 951–984 (GAVM…CPAD), 985–1018 (VALY…DRTD), 1019–1052 (KQLF…HPLN), 1053–1086 (TKII…DPLS), 1091–1124 (VHNR…HPNS), 1125–1158 (AALL…AGAF), 1160–1193 (AAVM…KQLN), and 1205–1238 (AWRA…APAV). Disordered stretches follow at residues 1237-1257 (AVRG…GRRP) and 1333-1385 (IQDP…ADDM). Positions 1356-1365 (QDADYYEEPE) are enriched in acidic residues. Residues 1374-1385 (AVRRPMPDADDM) are compositionally biased toward basic and acidic residues.

Part of 2 complexes of about 600 and less than 2000 kDa, both of which also contain non-polysomal RNA.

The protein localises to the plastid. It is found in the chloroplast stroma. Functionally, involved, directly or indirectly, in the processing of the chloroplast encoded psbD mRNA to its mature form, acting via the 5'-UTR of the psbD mRNA. The last 588 amino acids of the protein are sufficient to confer stability on the transcript in vivo. The protein is PsbD mRNA maturation factor Nac2, chloroplastic (NAC2) of Chlamydomonas reinhardtii (Chlamydomonas smithii).